The sequence spans 954 residues: MLHEALMLEIYRQALNAGALPTARPRSTESANSSERCPSHDSNSSEHGGGAGSGGVGHRLDAAALSTGVMPGEGPTTLHSSFPAVPQSLPSQPPSMEAYLHMVAAAAQQYGFPLAAAAAAGAGPRLPLPLANEAAAPFKLPPQASPTASSNNSEALDFRTNLYGRAESAEPPASEGEEEEFDDGANNPLDLSVGTRKRGHESEPQLGHIQVKKMFKSDSPPANSVASPSASQLLPGVNPYLAAVAAANIFRAGQFPDWNSKNDLVVDPLEKMSDIVKGGASGMGTKEKMHSSKATTPQAASQPPKSPVQPTPNQNSESGGGSGGGAAGSGAVTKARHNIWQSHWQNKGVASSVFRCVWCKQSFPTLEALTTHMKDSKHCGVNVPPFGNLPSNNPQPQHHHPTPPPPPQNHNLRKHSSGSASNHSPSANVKNAFQYRGDPPTPLPRKLVRGQNVWLGKGVEQAMQILKCMRCGESFRSLGEMTKHMQETQHYTNILSQEQSISIKSGNANANSDAKESHNSLSSEESRTLSAVLTCKVCDKAFNSLGDLSNHMAKNNHYAEPLLQSAGARKRPAPKKREKSLPVRKLLEMKGGSGTTQEDHSNEKTSVQGKPGLGPGGGDKNDAALFAERMRQYITGVKAPEEIAKVAAAQLLAKNKSPELVEQKNGGSAKAAGASSVLSAIEQMFTTSFDTPPRHASLPASSPSNSSTKNTSPVASSILKRLGIDETVDYNKPLIDTNDPYYQHYRYTSSERSGSECSAEARPRLDAPTPEKQQQGGGHDEESSKPAIKQEREAESKPVKMEIKSEFVDEPNEAEETSKMEAAVVNGSATNNNNNIVERSSPKTPSSAASPQTRLLPPRSPAESQRSVTPKSPASSHKSYDGSSEGTKKFPSDSLNALSSMFDSLGSSGAGANSRAKLAAAAAAGGSESPENLTAGGNSLAALRQFCVKKEKTA.

Disordered regions lie at residues 20-91, 167-207, and 276-331; these read LPTA…SLPS, ESAE…PQLG, and VKGG…GSGA. Residues 47-57 are compositionally biased toward gly residues; the sequence is HGGGAGSGGVG. Over residues 292–303 the composition is skewed to polar residues; sequence SKATTPQAASQP. A compositionally biased stretch (gly residues) spans 318–328; sequence SGGGSGGGAAG. Residues 354 to 378 form a C2H2-type 1 zinc finger; it reads FRCVWCKQSFPTLEALTTHMKDSKH. The tract at residues 383–444 is disordered; it reads VPPFGNLPSN…YRGDPPTPLP (62 aa). Over residues 417-428 the composition is skewed to low complexity; the sequence is SGSASNHSPSAN. 2 C2H2-type zinc fingers span residues 466–490 and 533–557; these read LKCM…ETQH and LTCK…KNNH. Disordered stretches follow at residues 563 to 622, 689 to 714, and 748 to 935; these read LQSA…DKND, FDTP…TSPV, and TSSE…NLTA. The segment covering 568–578 has biased composition (basic residues); the sequence is ARKRPAPKKRE. Residues 579-588 show a composition bias toward basic and acidic residues; the sequence is KSLPVRKLLE. Residues 696–712 show a composition bias toward low complexity; that stretch reads ASLPASSPSNSSTKNTS. Residues serine 750 and serine 758 each carry the phosphoserine modification. Basic and acidic residues predominate over residues 778–807; it reads GHDEESSKPAIKQEREAESKPVKMEIKSEF. Residues 842–851 are compositionally biased toward low complexity; that stretch reads PKTPSSAASP. 2 stretches are compositionally biased toward polar residues: residues 862-885 and 893-907; these read AESQ…GSSE and DSLN…SLGS. Low complexity predominate over residues 910 to 926; it reads AGANSRAKLAAAAAAGG.

This sequence belongs to the teashirt C2H2-type zinc-finger protein family. Binds arm. Shows a dynamic expression pattern during embryogenesis. Expressed in the embryonic trunk region (PS 3-13) with expression strongest in the thoracic segments. Expressed in a small group of cells corresponding to the anal tuft from stage 14. Strongly expressed in the embryonic ventral nerve cord. Also expressed in the proximal domain of the leg imaginal disk and in the region of the wing disk that will give rise to the proximal wing hinge. Expressed at high levels in the anterior and central embryonic midgut mesoderm and in the embryonic midgut endoderm. Expressed at a low level in more posterior visceral mesoderm of the gut. From stage 12 onwards, tsh and tio are colocalized in some cells of the CNS, trunk epidermis, hindgut and Malpighian tubules.

It is found in the nucleus. Its subcellular location is the cytoplasm. Its function is as follows. Homeotic protein that acts downstream of Arm in the Wg cascade during embryogenesis to determine segment identity throughout the entire trunk. Acts cooperatively with other trunk homeotic proteins to repress head homeotic genes and therefore repress head segmental identity. Necessary, in combination with Scr, for the formation of the prothoracic segment. Promotes eye development in the dorsal region of the eye disk and suppresses eye development in the ventral region in combination with Wg-signaling and several early dorso-ventral eye patterning genes. Required for proper development of proximal leg segments. Has differential functions along the dorso-ventral axs of the antennal and leg disks. May play a role in wing hinge development. Possible involvement in chromatin structure for modulation of transcription. Binds DNA and can act as both a transcriptional repressor and activator. Positively regulates its own expression as well as that of Dll. Negatively regulates the expression of mod. Required for Wg-mediated transcriptional repression of Ubx in the midgut. Also represses transcription of lab in the midgut and is necessary for the proper formation of anterior and central midgut structures. Tiptop (tio) and teashirt (tsh) have, on the whole, common activities. Tio and tsh repress each other's expression and tsh has a crucial role for trunk patterning that is in part masked by ectopic expression of tiptop. Both genes share a common activity required for the activation of Ser and svb and the maintenance of en and wg. The chain is Protein teashirt (tsh) from Drosophila melanogaster (Fruit fly).